The following is a 303-amino-acid chain: Recombination-associated protein RdgC (303 aa).

It belongs to the RdgC family.

It is found in the cytoplasm. The protein resides in the nucleoid. In terms of biological role, may be involved in recombination. In Salmonella agona (strain SL483), this protein is Recombination-associated protein RdgC.